We begin with the raw amino-acid sequence, 108 residues long: ATP-dependent Clp protease adapter protein ClpS (108 aa).

Basic and acidic residues predominate over residues 1 to 15 (MPHESSPDSQHEHGV). The tract at residues 1 to 22 (MPHESSPDSQHEHGVAVEAARP) is disordered.

It belongs to the ClpS family. As to quaternary structure, binds to the N-terminal domain of the chaperone ClpA.

In terms of biological role, involved in the modulation of the specificity of the ClpAP-mediated ATP-dependent protein degradation. The chain is ATP-dependent Clp protease adapter protein ClpS from Stenotrophomonas maltophilia (strain K279a).